The primary structure comprises 85 residues: UPF0386 protein HNE_3437 (85 aa).

The protein belongs to the UPF0386 family.

This is UPF0386 protein HNE_3437 from Hyphomonas neptunium (strain ATCC 15444).